The chain runs to 317 residues: Melanocyte-stimulating hormone receptor (317 aa).

Over 1–37 (MPVLGSQRRLLGSLNCTPPATFPLTLAPNRTGPQCLE) the chain is Extracellular. Residue Asn29 is glycosylated (N-linked (GlcNAc...) asparagine). The chain crosses the membrane as a helical span at residues 38-63 (VSIPDGLFLSLGLVSLVENVLVVAAI). Residues 64–72 (AKNRNLHSP) are Cytoplasmic-facing. The helical transmembrane segment at 73–93 (MYYFICCLAMSDLLVSVSNVL) threads the bilayer. Topologically, residues 94–118 (ETAVMLLLEAGALAAQAAVVQQLDN) are extracellular. Residues 119–140 (VIDVLICGSMVSSLCFLGAIAV) traverse the membrane as a helical segment. At 141–163 (DRYISIFYALRYHSVVTLPRAWR) the chain is on the cytoplasmic side. Residues 164–183 (IIAAIWVASILTSLLFITYY) traverse the membrane as a helical segment. The Extracellular segment spans residues 184–191 (NHTVVLLC). The chain crosses the membrane as a helical span at residues 192–211 (LVGFFIAMLALMAVLYVHML). Topologically, residues 212 to 240 (ARACQHARGIARLQKRQRPIHQGFGLKGA) are cytoplasmic. Residues 241-266 (ATLTILLGVFFLCWGPFFLHLSLIVL) form a helical membrane-spanning segment. Residues 267–279 (CPQHPTCGCIFKN) are Extracellular-facing. The chain crosses the membrane as a helical span at residues 280-300 (FNLFLALIICNAIVDPLIYAF). At 301–317 (RSQELRKTLQEVLQCSW) the chain is on the cytoplasmic side. The S-palmitoyl cysteine moiety is linked to residue Cys315.

It belongs to the G-protein coupled receptor 1 family. As to quaternary structure, interacts with MGRN1, but does not undergo MGRN1-mediated ubiquitination; this interaction competes with GNAS-binding and thus inhibits agonist-induced cAMP production. Interacts with OPN3; the interaction results in a decrease in MC1R-mediated cAMP signaling and ultimately a decrease in melanin production in melanocytes.

It localises to the cell membrane. In terms of biological role, receptor for MSH (alpha, beta and gamma) and ACTH. The activity of this receptor is mediated by G proteins which activate adenylate cyclase. Mediates melanogenesis, the production of eumelanin (black/brown) and phaeomelanin (red/yellow), via regulation of cAMP signaling in melanocytes. The protein is Melanocyte-stimulating hormone receptor (MC1R) of Dama dama (Fallow deer).